We begin with the raw amino-acid sequence, 107 residues long: Insulin (107 aa).

Positions 1 to 24 are cleaved as a signal peptide; it reads MALWIRSLPLLALLVFSGPGTSYA. 3 cysteine pairs are disulfide-bonded: Cys31-Cys93, Cys43-Cys106, and Cys92-Cys97. Residues 57–84 constitute a propeptide, c peptide; that stretch reads DVEQPLVSSPLRGEAGVLPFQQEEYEKV.

The protein belongs to the insulin family. In terms of assembly, heterodimer of a B chain and an A chain linked by two disulfide bonds.

It localises to the secreted. Insulin decreases blood glucose concentration. It increases cell permeability to monosaccharides, amino acids and fatty acids. It accelerates glycolysis, the pentose phosphate cycle, and glycogen synthesis in liver. This Gallus gallus (Chicken) protein is Insulin (INS).